Consider the following 212-residue polypeptide: tRNA (guanine-N(7)-)-methyltransferase (212 aa).

E44, D69, D96, and D118 together coordinate S-adenosyl-L-methionine. D118 is an active-site residue. Residue K122 coordinates substrate. An interaction with RNA region spans residues 124–129 (RHEKRR). Substrate contacts are provided by residues D154 and 191-194 (TEYE).

It belongs to the class I-like SAM-binding methyltransferase superfamily. TrmB family.

The enzyme catalyses guanosine(46) in tRNA + S-adenosyl-L-methionine = N(7)-methylguanosine(46) in tRNA + S-adenosyl-L-homocysteine. It functions in the pathway tRNA modification; N(7)-methylguanine-tRNA biosynthesis. Catalyzes the formation of N(7)-methylguanine at position 46 (m7G46) in tRNA. The protein is tRNA (guanine-N(7)-)-methyltransferase of Streptococcus gordonii (strain Challis / ATCC 35105 / BCRC 15272 / CH1 / DL1 / V288).